Reading from the N-terminus, the 55-residue chain is ATP synthase F(0) complex subunit 8 (55 aa).

Residues 4–24 (LNPAPWFAILVFSWLVFLTVI) traverse the membrane as a helical segment. The tract at residues 36 to 55 (EPTSQSTEKTKPEPWNWPWH) is disordered.

It belongs to the ATPase protein 8 family. Component of the ATP synthase complex composed at least of ATP5F1A/subunit alpha, ATP5F1B/subunit beta, ATP5MC1/subunit c (homooctomer), MT-ATP6/subunit a, MT-ATP8/subunit 8, ATP5ME/subunit e, ATP5MF/subunit f, ATP5MG/subunit g, ATP5MK/subunit k, ATP5MJ/subunit j, ATP5F1C/subunit gamma, ATP5F1D/subunit delta, ATP5F1E/subunit epsilon, ATP5PF/subunit F6, ATP5PB/subunit b, ATP5PD/subunit d, ATP5PO/subunit OSCP. ATP synthase complex consists of a soluble F(1) head domain (subunits alpha(3) and beta(3)) - the catalytic core - and a membrane F(0) domain - the membrane proton channel (subunits c, a, 8, e, f, g, k and j). These two domains are linked by a central stalk (subunits gamma, delta, and epsilon) rotating inside the F1 region and a stationary peripheral stalk (subunits F6, b, d, and OSCP).

It is found in the mitochondrion membrane. Functionally, subunit 8, of the mitochondrial membrane ATP synthase complex (F(1)F(0) ATP synthase or Complex V) that produces ATP from ADP in the presence of a proton gradient across the membrane which is generated by electron transport complexes of the respiratory chain. ATP synthase complex consist of a soluble F(1) head domain - the catalytic core - and a membrane F(1) domain - the membrane proton channel. These two domains are linked by a central stalk rotating inside the F(1) region and a stationary peripheral stalk. During catalysis, ATP synthesis in the catalytic domain of F(1) is coupled via a rotary mechanism of the central stalk subunits to proton translocation. In vivo, can only synthesize ATP although its ATP hydrolase activity can be activated artificially in vitro. Part of the complex F(0) domain. The protein is ATP synthase F(0) complex subunit 8 of Salvelinus alpinus (Arctic char).